Reading from the N-terminus, the 285-residue chain is uncharacterized protein (285 aa).

A run of 7 helical transmembrane segments spans residues 6-26 (YLVVILTVAGVLVILGFTPLI), 38-58 (VFAAILFLYVFFGRQIIYIFP), 84-104 (IFLLDLCPFFALIGPIFIFLR), 110-130 (GVLAIFGFYGAAITLFGELIF), 153-173 (FMMHFLSFLLSLAVFLWDDGF), 176-196 (ISFFYIHVFALAYLSYVALMV), and 236-256 (LIFGVSFGLSYFAIVLLTVLV).

Its subcellular location is the cell membrane. This is an uncharacterized protein from Mycoplasma pneumoniae (strain ATCC 29342 / M129 / Subtype 1) (Mycoplasmoides pneumoniae).